We begin with the raw amino-acid sequence, 221 residues long: Protein-L-isoaspartate O-methyltransferase (221 aa).

The active site involves S68.

The protein belongs to the methyltransferase superfamily. L-isoaspartyl/D-aspartyl protein methyltransferase family.

It is found in the cytoplasm. The enzyme catalyses [protein]-L-isoaspartate + S-adenosyl-L-methionine = [protein]-L-isoaspartate alpha-methyl ester + S-adenosyl-L-homocysteine. Its function is as follows. Catalyzes the methyl esterification of L-isoaspartyl residues in peptides and proteins that result from spontaneous decomposition of normal L-aspartyl and L-asparaginyl residues. It plays a role in the repair and/or degradation of damaged proteins. The polypeptide is Protein-L-isoaspartate O-methyltransferase (Desulfosudis oleivorans (strain DSM 6200 / JCM 39069 / Hxd3) (Desulfococcus oleovorans)).